Reading from the N-terminus, the 93-residue chain is Cobalt transport protein CbiN (93 aa).

2 consecutive transmembrane segments (helical) span residues 5 to 25 and 63 to 83; these read LILL…NHGG and LLFT…LGYA.

It belongs to the CbiN family. As to quaternary structure, forms an energy-coupling factor (ECF) transporter complex composed of an ATP-binding protein (A component, CbiO), a transmembrane protein (T component, CbiQ) and 2 possible substrate-capture proteins (S components, CbiM and CbiN) of unknown stoichimetry.

It localises to the cell inner membrane. Its pathway is cofactor biosynthesis; adenosylcobalamin biosynthesis. In terms of biological role, part of the energy-coupling factor (ECF) transporter complex CbiMNOQ involved in cobalt import. This is Cobalt transport protein CbiN from Klebsiella pneumoniae (strain 342).